The sequence spans 721 residues: BBSome complex member BBS2 (721 aa).

The stretch at 325 to 369 (KGNLLDTSVEQGLIRELSQKKQNLLLELRNYEENTKAELSSPLNE) forms a coiled coil.

In terms of assembly, part of BBSome complex, that contains BBS1, BBS2, BBS4, BBS5, BBS7, BBS8/TTC8, BBS9 and BBIP10. Interacts (via C-terminus) with BBS7. Interacts (via coiled coil domain) with MKKS. Interacts with CCDC28B. Interacts with DLEC1.

Its subcellular location is the cell projection. The protein localises to the cilium membrane. It localises to the cytoplasm. It is found in the cytoskeleton. The protein resides in the microtubule organizing center. Its subcellular location is the centrosome. The protein localises to the centriolar satellite. The BBSome complex is thought to function as a coat complex required for sorting of specific membrane proteins to the primary cilia. The BBSome complex is required for ciliogenesis but is dispensable for centriolar satellite function. This ciliogenic function is mediated in part by the Rab8 GDP/GTP exchange factor, which localizes to the basal body and contacts the BBSome. Rab8(GTP) enters the primary cilium and promotes extension of the ciliary membrane. Firstly the BBSome associates with the ciliary membrane and binds to RAB3IP/Rabin8, the guanosyl exchange factor (GEF) for Rab8 and then the Rab8-GTP localizes to the cilium and promotes docking and fusion of carrier vesicles to the base of the ciliary membrane. The BBSome complex, together with the LTZL1, controls SMO ciliary trafficking and contributes to the sonic hedgehog (SHH) pathway regulation. Required for proper BBSome complex assembly and its ciliary localization. The chain is BBSome complex member BBS2 (Bbs2) from Rattus norvegicus (Rat).